A 604-amino-acid polypeptide reads, in one-letter code: Putative O-acetyltransferase SAV0974 (604 aa).

The next 11 membrane-spanning stretches (helical) occupy residues 15 to 35 (YMPG…IYHL), 43 to 63 (GFLG…SLLL), 85 to 105 (LLPA…LLKS), 150 to 170 (AIEE…LLTI), 176 to 196 (IGFI…FIYS), 212 to 232 (LQTL…KLKN), 240 to 260 (YVID…FFII), 267 to 287 (IYDG…ASVV), 310 to 330 (YSLY…YVDG), 332 to 352 (IPVY…ELSY), and 377 to 397 (FIRM…LVGA). Catalysis depends on residues Ser459, Asp581, and His584.

The protein belongs to the acyltransferase 3 family.

Its subcellular location is the cell membrane. In Staphylococcus aureus (strain Mu50 / ATCC 700699), this protein is Putative O-acetyltransferase SAV0974.